A 30-amino-acid chain; its full sequence is Photosystem I reaction center subunit XII (30 aa).

The chain crosses the membrane as a helical span at residues Ile7–Tyr29.

This sequence belongs to the PsaM family.

It is found in the plastid. Its subcellular location is the chloroplast thylakoid membrane. In Phaeodactylum tricornutum (strain CCAP 1055/1), this protein is Photosystem I reaction center subunit XII.